We begin with the raw amino-acid sequence, 370 residues long: MTQPIIELHQVTKRYADNTILSNINLTLESGKFYTLLGPSGCGKTTILRTIAGFTDATTGDILFAGKRINDVPANKRNVNTVFQDYALFPHMTVAENVAFGLTLQKRPKSEIAERVNQALRLVQLADYGDRAISALSGGQQQRIAIARAIVMQPQVLLLDEPLSALDAKLRRQMQYELRDLQQRLGITFLFVTHDQEEALAMSDEIFVMNQGEILQSGSPVDIYDEPINHFVADFIGESNILPGKMIDDFQVAFGGHQFECADAGIPVNEPVEIVIRPEDLTLTDLAHAKLTVTINTQLFRGDYYEIAATDGLGNDWLIHSVNPAEDGDQIGLTFRPQDLHVMRFGEKEAEFDARLETYEGTEDDRFDET.

In terms of domain architecture, ABC transporter spans 6-236 (IELHQVTKRY…PINHFVADFI (231 aa)). 38-45 (GPSGCGKT) provides a ligand contact to ATP.

It belongs to the ABC transporter superfamily. Spermidine/putrescine importer (TC 3.A.1.11.1) family. As to quaternary structure, the complex is composed of two ATP-binding proteins (PotA), two transmembrane proteins (PotB and PotC) and a solute-binding protein (PotD).

It is found in the cell membrane. It carries out the reaction ATP + H2O + polyamine-[polyamine-binding protein]Side 1 = ADP + phosphate + polyamineSide 2 + [polyamine-binding protein]Side 1.. In terms of biological role, part of the ABC transporter complex PotABCD involved in spermidine/putrescine import. Responsible for energy coupling to the transport system. This Levilactobacillus brevis (strain ATCC 367 / BCRC 12310 / CIP 105137 / JCM 1170 / LMG 11437 / NCIMB 947 / NCTC 947) (Lactobacillus brevis) protein is Spermidine/putrescine import ATP-binding protein PotA.